The chain runs to 597 residues: Glypican-3 (597 aa).

The first 24 residues, 1 to 24 (MAGTVRTACLLVAMLLGLGCLGQA), serve as a signal peptide directing secretion. Glutamine 25 is modified (pyrrolidone carboxylic acid). Cystine bridges form between cysteine 34–cysteine 71, cysteine 64–cysteine 261, cysteine 72–cysteine 264, cysteine 196–cysteine 348, cysteine 251–cysteine 284, cysteine 273–cysteine 421, and cysteine 277–cysteine 409. 2 N-linked (GlcNAc...) asparagine glycosylation sites follow: asparagine 123 and asparagine 240. The residue at position 351 (serine 351) is a Phosphoserine. The N-linked (GlcNAc...) asparagine glycan is linked to asparagine 417. Residues serine 494 and serine 508 are each glycosylated (O-linked (Xyl...) (glycosaminoglycan) serine). The interval 533–553 (DAPGNKQHGNQKDNEITTSHS) is disordered.

It belongs to the glypican family. As to quaternary structure, heterodimer; disulfide-linked. Cleavage by a furin-like convertase results in production of alpha and beta chains which form a disulfide-linked heterodimer. Interacts with DPP4. Interacts with FGF2. Interacts with WNT5A. Also interacts with WNT3A and WNT7B. Interacts with hedgehog protein SHH; the heparan sulfate chains are not required for the interaction. Also interacts with hedgehog protein IHH. Interacts with CD81. Interacts with Wnt receptors FZD4, FZD7 and FZD8; the heparan sulfate chains are required for the interaction. Post-translationally, O-glycosylated; contains heparan sulfate and/or chondroitin sulfate. Cleaved intracellularly by a furin-like convertase to generate 2 subunits, alpha and beta, which remain associated through disulfide bonds and are associated with the cell surface via the GPI-anchor. This processing is essential for its role in inhibition of hedgehog signaling. A second proteolytic event may result in cleavage of the protein on the cell surface, separating it from the GPI-anchor and leading to its shedding from the cell surface.

It is found in the cell membrane. Its function is as follows. Cell surface proteoglycan. Negatively regulates the hedgehog signaling pathway when attached via the GPI-anchor to the cell surface by competing with the hedgehog receptor PTC1 for binding to hedgehog proteins. Binding to the hedgehog protein SHH triggers internalization of the complex by endocytosis and its subsequent lysosomal degradation. Positively regulates the canonical Wnt signaling pathway by binding to the Wnt receptor Frizzled and stimulating the binding of the Frizzled receptor to Wnt ligands. Positively regulates the non-canonical Wnt signaling pathway. Binds to CD81 which decreases the availability of free CD81 for binding to the transcriptional repressor HHEX, resulting in nuclear translocation of HHEX and transcriptional repression. Inhibits the dipeptidyl peptidase activity of DPP4. Plays a role in limb patterning and skeletal development by controlling the cellular response to BMP4. Modulates the effects of growth factors BMP2, BMP7 and FGF7 on renal branching morphogenesis. Required for coronary vascular development. Plays a role in regulating cell movements during gastrulation. The sequence is that of Glypican-3 (Gpc3) from Rattus norvegicus (Rat).